Consider the following 585-residue polypeptide: Squalene epoxidase 2, mitochondrial (585 aa).

A mitochondrion-targeting transit peptide spans 1 to 45 (MKPFVIRNLPRFQSTLRSSLLYTNHRPSSRFSLSTRRFTTGATYI). A helical transmembrane segment spans residues 70–90 (AKIALDQFIASLFTFLLLYIL). Residues 132-133 (VA), 152-153 (ER), Arg160, Arg231, Val247, Asp409, and Met422 each bind FAD. Transmembrane regions (helical) follow at residues 493 to 513 (FDYL…LSGL), 520 to 540 (LVLH…LPFP), and 545 to 565 (FWLG…IIKA).

This sequence belongs to the squalene monooxygenase family. It depends on FAD as a cofactor. As to expression, expressed mainly in inflorescences. Detected in seedlings, leaves, stems, and siliques.

The protein localises to the mitochondrion membrane. The catalysed reaction is squalene + reduced [NADPH--hemoprotein reductase] + O2 = (S)-2,3-epoxysqualene + oxidized [NADPH--hemoprotein reductase] + H2O + H(+). The protein operates within terpene metabolism; lanosterol biosynthesis; lanosterol from farnesyl diphosphate: step 2/3. Its function is as follows. Catalyzes the stereospecific oxidation of squalene to (S)-2,3-epoxysqualene, and is considered to be a rate-limiting enzyme in steroid biosynthesis. Produces primarily oxidosqualene. This chain is Squalene epoxidase 2, mitochondrial (SQE2), found in Arabidopsis thaliana (Mouse-ear cress).